We begin with the raw amino-acid sequence, 117 residues long: Large ribosomal subunit protein bL20c (117 aa).

Belongs to the bacterial ribosomal protein bL20 family.

It is found in the plastid. Its subcellular location is the chloroplast. Functionally, binds directly to 23S ribosomal RNA and is necessary for the in vitro assembly process of the 50S ribosomal subunit. It is not involved in the protein synthesizing functions of that subunit. In Populus trichocarpa (Western balsam poplar), this protein is Large ribosomal subunit protein bL20c.